Consider the following 149-residue polypeptide: Transcriptional repressor NrdR (149 aa).

A zinc finger spans residues 3–34 (CPFCSATDTKVIDSRLVAEGHQVRRRRECTEC). Residues 49 to 139 (PRVIKRDGTR…VYRAFEDVSE (91 aa)) enclose the ATP-cone domain.

The protein belongs to the NrdR family. The cofactor is Zn(2+).

Its function is as follows. Negatively regulates transcription of bacterial ribonucleotide reductase nrd genes and operons by binding to NrdR-boxes. The polypeptide is Transcriptional repressor NrdR (Shewanella sp. (strain MR-4)).